The chain runs to 569 residues: Urease subunit alpha (569 aa).

The Urease domain occupies 131–569; the sequence is GSIDTHIHFI…VPMAQKYFLL (439 aa). Positions 136, 138, and 219 each coordinate Ni(2+). N6-carboxylysine is present on Lys-219. Residue His-221 coordinates substrate. Ni(2+)-binding residues include His-248 and His-274. His-322 (proton donor) is an active-site residue. Residue Asp-362 participates in Ni(2+) binding.

Belongs to the metallo-dependent hydrolases superfamily. Urease alpha subunit family. As to quaternary structure, heterotrimer of UreA (gamma), UreB (beta) and UreC (alpha) subunits. Two heterotrimers associate to form the active enzyme. In most bacteria it is thought that three heterotrimers form the active enzyme. Ni cation serves as cofactor. In terms of processing, carboxylation allows a single lysine to coordinate two nickel ions.

It localises to the cytoplasm. The enzyme catalyses urea + 2 H2O + H(+) = hydrogencarbonate + 2 NH4(+). Its pathway is nitrogen metabolism; urea degradation; CO(2) and NH(3) from urea (urease route): step 1/1. With respect to regulation, inhibited by HgCl2 and acetohydroxyamic acid slightly by EDTA, but not by boric acid or L-methionine-DL-sulfoximine. In Prochlorococcus marinus subsp. pastoris (strain PCC 9511), this protein is Urease subunit alpha.